The following is an 881-amino-acid chain: Alanine--tRNA ligase (881 aa).

Residues His568, His572, Cys670, and His674 each coordinate Zn(2+).

Belongs to the class-II aminoacyl-tRNA synthetase family. It depends on Zn(2+) as a cofactor.

The protein localises to the cytoplasm. The enzyme catalyses tRNA(Ala) + L-alanine + ATP = L-alanyl-tRNA(Ala) + AMP + diphosphate. In terms of biological role, catalyzes the attachment of alanine to tRNA(Ala) in a two-step reaction: alanine is first activated by ATP to form Ala-AMP and then transferred to the acceptor end of tRNA(Ala). Also edits incorrectly charged Ser-tRNA(Ala) and Gly-tRNA(Ala) via its editing domain. The sequence is that of Alanine--tRNA ligase from Clostridium acetobutylicum (strain ATCC 824 / DSM 792 / JCM 1419 / IAM 19013 / LMG 5710 / NBRC 13948 / NRRL B-527 / VKM B-1787 / 2291 / W).